The sequence spans 585 residues: Cytidine monophosphate-N-acetylneuraminic acid hydroxylase (585 aa).

Positions 9–107 (LSPVEVANLK…VEMDENNRLL (99 aa)) constitute a Rieske domain. [2Fe-2S] cluster-binding residues include Cys-49, His-51, Cys-70, and His-73.

This sequence belongs to the CMP-Neu5Ac hydroxylase family. [2Fe-2S] cluster is required as a cofactor.

Its subcellular location is the cytoplasm. The catalysed reaction is CMP-N-acetyl-beta-neuraminate + 2 Fe(II)-[cytochrome b5] + O2 + 2 H(+) = CMP-N-glycoloyl-beta-neuraminate + 2 Fe(III)-[cytochrome b5] + H2O. The protein operates within amino-sugar metabolism; N-acetylneuraminate metabolism. In terms of biological role, sialic acids are components of carbohydrate chains of glycoconjugates and are involved in cell-cell recognition and cell-pathogen interactions. Catalyzes the conversion of CMP-N-acetylneuraminic acid (CMP-Neu5Ac) into its hydroxylated derivative CMP-N-glycolylneuraminic acid (CMP-Neu5Gc), a sialic acid abundantly expressed at the surface of many cells. This Pongo pygmaeus (Bornean orangutan) protein is Cytidine monophosphate-N-acetylneuraminic acid hydroxylase (CMAH).